We begin with the raw amino-acid sequence, 253 residues long: tRNA (guanine-N(1)-)-methyltransferase (253 aa).

Residues Gly-116 and 136 to 141 (VGDYIL) contribute to the S-adenosyl-L-methionine site.

This sequence belongs to the RNA methyltransferase TrmD family. In terms of assembly, homodimer.

The protein resides in the cytoplasm. The enzyme catalyses guanosine(37) in tRNA + S-adenosyl-L-methionine = N(1)-methylguanosine(37) in tRNA + S-adenosyl-L-homocysteine + H(+). Functionally, specifically methylates guanosine-37 in various tRNAs. This Colwellia psychrerythraea (strain 34H / ATCC BAA-681) (Vibrio psychroerythus) protein is tRNA (guanine-N(1)-)-methyltransferase.